Reading from the N-terminus, the 714-residue chain is DNA gyrase subunit B (714 aa).

In terms of domain architecture, Toprim spans 492 to 606; it reads SELYVVEGDS…NGHVFLAQPP (115 aa). Positions 498, 571, and 573 each coordinate Mg(2+).

This sequence belongs to the type II topoisomerase GyrB family. As to quaternary structure, heterotetramer, composed of two GyrA and two GyrB chains. In the heterotetramer, GyrA contains the active site tyrosine that forms a transient covalent intermediate with DNA, while GyrB binds cofactors and catalyzes ATP hydrolysis. Mg(2+) is required as a cofactor. It depends on Mn(2+) as a cofactor. Ca(2+) serves as cofactor.

The protein localises to the cytoplasm. It carries out the reaction ATP-dependent breakage, passage and rejoining of double-stranded DNA.. Its activity is regulated as follows. DNA supercoiling is inhibited by EDTA, novobiocin, coumermycin and ciprofloxacin. In terms of biological role, a type II topoisomerase that negatively supercoils closed circular double-stranded DNA in an ATP-dependent manner and also catalyzes the interconversion of other topological isomers of double-stranded DNA rings, including catenanes and knotted rings. Relaxes negatively supercoiled DNA in an ATP-independent manner. A linear reaction intermediate can be trapped in the presence of the antibiotic ciprofloxacin. Negative supercoiling favors strand separation, and DNA replication, transcription, recombination and repair, all of which involve strand separation. Type II topoisomerases break and join 2 DNA strands simultaneously in an ATP-dependent manner. The protein is DNA gyrase subunit B of Mycobacterium bovis (strain BCG / Pasteur 1173P2).